A 29-amino-acid chain; its full sequence is Omega-conotoxins GVIIA/GVIIB (29 aa).

Cystine bridges form between Cys-1–Cys-16, Cys-8–Cys-19, and Cys-15–Cys-26. A 4-hydroxyproline mark is found at Pro-4 and Pro-7.

In terms of tissue distribution, expressed by the venom duct.

It localises to the secreted. Omega-conotoxins act at presynaptic membranes, they bind and block voltage-gated calcium channels (Cav). The chain is Omega-conotoxins GVIIA/GVIIB from Conus geographus (Geography cone).